The primary structure comprises 146 residues: Large ribosomal subunit protein uL15 (146 aa).

The disordered stretch occupies residues 1-58 (MNLSELRPAPGARKKPTRKGQGIGSGLGKTAGKGHKGQNARSGGGVRPGFEGGQMPLQ). 2 stretches are compositionally biased toward gly residues: residues 21 to 31 (QGIGSGLGKTA) and 42 to 52 (SGGGVRPGFEG).

This sequence belongs to the universal ribosomal protein uL15 family. Part of the 50S ribosomal subunit.

In terms of biological role, binds to the 23S rRNA. This chain is Large ribosomal subunit protein uL15, found in Desulforamulus reducens (strain ATCC BAA-1160 / DSM 100696 / MI-1) (Desulfotomaculum reducens).